A 319-amino-acid polypeptide reads, in one-letter code: tRNA uridine(34) hydroxylase (319 aa).

Residues 133-231 form the Rhodanese domain; the sequence is EDPNSVVIDT…YLEDVSSENS (99 aa). Catalysis depends on Cys191, which acts as the Cysteine persulfide intermediate.

Belongs to the TrhO family.

It carries out the reaction uridine(34) in tRNA + AH2 + O2 = 5-hydroxyuridine(34) in tRNA + A + H2O. Catalyzes oxygen-dependent 5-hydroxyuridine (ho5U) modification at position 34 in tRNAs. In Prochlorococcus marinus (strain NATL2A), this protein is tRNA uridine(34) hydroxylase.